We begin with the raw amino-acid sequence, 268 residues long: Undecaprenyl-diphosphatase (268 aa).

Transmembrane regions (helical) follow at residues 11 to 33, 46 to 66, 84 to 104, 107 to 127, 144 to 164, 185 to 205, 213 to 233, and 246 to 266; these read FLGL…LLLI, FEVL…SAKL, LGVL…HGFI, VLFE…FILL, YPLP…IPGV, AEFS…YDLF, FNDG…GVFV, and FALF…ALII.

It belongs to the UppP family.

Its subcellular location is the cell inner membrane. The enzyme catalyses di-trans,octa-cis-undecaprenyl diphosphate + H2O = di-trans,octa-cis-undecaprenyl phosphate + phosphate + H(+). Functionally, catalyzes the dephosphorylation of undecaprenyl diphosphate (UPP). Confers resistance to bacitracin. In Brucella suis (strain ATCC 23445 / NCTC 10510), this protein is Undecaprenyl-diphosphatase.